Reading from the N-terminus, the 81-residue chain is Sulfur carrier protein TusA (81 aa).

The active-site Cysteine persulfide intermediate is the cysteine 19.

Belongs to the sulfur carrier protein TusA family. In terms of assembly, interacts with IscS.

It localises to the cytoplasm. It participates in tRNA modification. Sulfur carrier protein involved in sulfur trafficking in the cell. Part of a sulfur-relay system required for 2-thiolation during synthesis of 2-thiouridine of the modified wobble base 5-methylaminomethyl-2-thiouridine (mnm(5)s(2)U) in tRNA. Interacts with IscS and stimulates its cysteine desulfurase activity. Accepts an activated sulfur from IscS, which is then transferred to TusD, and thus determines the direction of sulfur flow from IscS to 2-thiouridine formation. Also appears to be involved in sulfur transfer for the biosynthesis of molybdopterin. The polypeptide is Sulfur carrier protein TusA (Citrobacter koseri (strain ATCC BAA-895 / CDC 4225-83 / SGSC4696)).